The sequence spans 63 residues: Arabinogalactan protein 41 (63 aa).

The first 27 residues, 1-27, serve as a signal peptide directing secretion; the sequence is MSGSRLFFGVSTIVSIIFAILLPMAHA. Residue Gln-28 is modified to Pyrrolidone carboxylic acid. 3 positions are modified to 4-hydroxyproline: Pro-32, Pro-34, and Pro-36. O-linked (Ara...) hydroxyproline glycosylation is found at Pro-32, Pro-34, and Pro-36. Ser-38 is lipidated: GPI-anchor amidated serine. A propeptide spans 39–63 (removed in mature form); it reads DGTTIDQGIAYVLMLVALVLTYLIH.

Belongs to the AG-peptide AGP family. In terms of processing, contains 4-hydroxyproline; hydroxylated on Pro-32, Pro-34 and Pro-36. Post-translationally, O-glycosylated on hydroxyprolines; noncontiguous hydroxylproline residues are glycosylated with arabinogalactan.

The protein localises to the cell membrane. Functionally, proteoglycan that seems to be implicated in diverse developmental roles such as differentiation, cell-cell recognition, embryogenesis and programmed cell death. The polypeptide is Arabinogalactan protein 41 (Arabidopsis thaliana (Mouse-ear cress)).